The sequence spans 604 residues: Solute carrier family 23 member 1 (604 aa).

Residues 1-29 form a disordered region; it reads MKAQEDPGSSKQHECPDSAGTSTRDQQAP. Topologically, residues 1–59 are cytoplasmic; the sequence is MKAQEDPGSSKQHECPDSAGTSTRDQQAPLPAEPKFDMLYKIEDVPPWYLCILLGFQHY. A helical transmembrane segment spans residues 60–80; the sequence is LTCFSGTIAVPFLLAEALCVG. At 81-88 the chain is on the extracellular side; the sequence is RDQHMISQ. Residues 89-109 traverse the membrane as a helical segment; that stretch reads LIGTIFTCVGITTLIQTTVGI. Arg-110 is a topological domain (cytoplasmic). Residues 111–131 form a helical membrane-spanning segment; it reads LPLFQASAFAFLVPAKAILAL. Over 132–166 the chain is Extracellular; the sequence is ERWKCPPEEEIYGNWSMPLNTSHIWHPRIREVQGA. N-linked (GlcNAc...) asparagine glycosylation is found at Asn-145 and Asn-151. The chain crosses the membrane as a helical span at residues 167–187; it reads IMVSSVVEVVIGLLGLPGALL. Residues 188-214 are Cytoplasmic-facing; sequence SYIGPLTVTPTVSLIGLSVFQAAGDRA. A helical transmembrane segment spans residues 215 to 232; that stretch reads GSHWGISACSILLIVLFS. The Extracellular portion of the chain corresponds to 233–236; it reads QYLR. The helical intramembrane region spans 237 to 250; the sequence is NLTFLLPVYRWGKG. Residues 251–257 are Extracellular-facing; sequence LTLFRIQ. A helical transmembrane segment spans residues 258-278; the sequence is IFKMFPIVLAIMTVWLLCYVL. Topologically, residues 279–319 are cytoplasmic; sequence TLTDVLPADPTVYGFQARTDARGDIMAISPWIRIPYPCQWG. A helical membrane pass occupies residues 320–340; the sequence is LPTVTVAAVLGMFSATLAGII. The Extracellular portion of the chain corresponds to 341–365; it reads ESIGDYYACARLAGAPPPPVHAINR. The helical transmembrane segment at 366–386 threads the bilayer; that stretch reads GIFTEGVCCIIAGLLGTGNGS. At 387–409 the chain is on the cytoplasmic side; the sequence is TSSSPNIGVLGITKVGSRRVVQY. The helical transmembrane segment at 410–430 threads the bilayer; it reads GAGIMLILGAIGKFTALFASL. Topologically, residues 431–433 are extracellular; that stretch reads PDP. The helical transmembrane segment at 434-454 threads the bilayer; sequence ILGGMFCTLFGMITAVGLSNL. Topologically, residues 455 to 464 are cytoplasmic; that stretch reads QFVDMNSSRN. Residues 465-485 traverse the membrane as a helical segment; the sequence is LFVLGFSMFFGLTLPNYLDSN. Topologically, residues 486-497 are extracellular; it reads PGAINTGVPEVD. Residues 498–518 form a helical membrane-spanning segment; it reads QILTVLLTTEMFVGGCLAFIL. The Cytoplasmic portion of the chain corresponds to 519–604; the sequence is DNTVPGSPEE…TETGSVCTKV (86 aa). Phosphothreonine is present on Thr-597. Phosphoserine is present on Ser-599. Thr-602 is subject to Phosphothreonine.

It belongs to the nucleobase:cation symporter-2 (NCS2) (TC 2.A.40) family. Phosphorylated. In terms of tissue distribution, highly expressed in the straight segment of proximal tubules in the kidney, in intestine and liver. Detected in epithelial cells of the bronchiole and epididymis.

Its subcellular location is the cell membrane. It catalyses the reaction L-ascorbate(out) + 2 Na(+)(out) = L-ascorbate(in) + 2 Na(+)(in). The catalysed reaction is urate(out) + 2 Na(+)(out) = urate(in) + 2 Na(+)(in). Functionally, sodium/ascorbate cotransporter. Mediates electrogenic uptake of vitamin C, with a stoichiometry of 2 Na(+) for each ascorbate. Has retained some ancestral activity toward nucleobases such as urate, an oxidized purine. Low-affinity high-capacity sodium:urate cotransporter, may regulate serum urate levels by serving as a renal urate re-absorber. This chain is Solute carrier family 23 member 1 (Slc23a1), found in Rattus norvegicus (Rat).